A 270-amino-acid polypeptide reads, in one-letter code: Protein MGF 110-1L (270 aa).

The signal sequence occupies residues 1 to 26 (MLGLQIFTLLSIPTLLYTYEIEPLER). At 27 to 117 (TSTPPEKELG…HERHEADIRK (91 aa)) the chain is on the extracellular side. The A repeat unit spans residues 27 to 146 (TSTPPEKELG…YIRKRSLQTV (120 aa)). Residue N75 is glycosylated (N-linked (GlcNAc...) asparagine; by host). A helical transmembrane segment spans residues 118–138 (WQKLLTYGFYLAGCILAVNYI). Residues 139-145 (RKRSLQT) are Cytoplasmic-facing. The helical transmembrane segment at 146 to 166 (VMYLLVFLVISFLLSQLMLYG) threads the bilayer. The stretch at 147-270 (MYLLVFLVIS…DNLMKKQDIM (124 aa)) is one B repeat. The Extracellular segment spans residues 167–270 (ELEDKKHKIG…DNLMKKQDIM (104 aa)).

The protein belongs to the asfivirus MGF 110 family.

It is found in the membrane. Functionally, plays a role in virus cell tropism, and may be required for efficient virus replication in macrophages. The polypeptide is Protein MGF 110-1L (Ornithodoros (relapsing fever ticks)).